We begin with the raw amino-acid sequence, 76 residues long: Translation initiation factor IF-1 (76 aa).

The 72-residue stretch at 1-72 (MAKKDVVVMQ…NKGRIVKREK (72 aa)) folds into the S1-like domain.

Belongs to the IF-1 family. In terms of assembly, component of the 30S ribosomal translation pre-initiation complex which assembles on the 30S ribosome in the order IF-2 and IF-3, IF-1 and N-formylmethionyl-tRNA(fMet); mRNA recruitment can occur at any time during PIC assembly.

It is found in the cytoplasm. Its function is as follows. One of the essential components for the initiation of protein synthesis. Stabilizes the binding of IF-2 and IF-3 on the 30S subunit to which N-formylmethionyl-tRNA(fMet) subsequently binds. Helps modulate mRNA selection, yielding the 30S pre-initiation complex (PIC). Upon addition of the 50S ribosomal subunit IF-1, IF-2 and IF-3 are released leaving the mature 70S translation initiation complex. This Petrotoga mobilis (strain DSM 10674 / SJ95) protein is Translation initiation factor IF-1.